A 280-amino-acid polypeptide reads, in one-letter code: 4-deoxy-L-threo-5-hexosulose-uronate ketol-isomerase (280 aa).

His-198, His-200, Glu-205, and His-247 together coordinate Zn(2+).

The protein belongs to the KduI family. It depends on Zn(2+) as a cofactor.

Its subcellular location is the cytoplasm. It carries out the reaction 5-dehydro-4-deoxy-D-glucuronate = 3-deoxy-D-glycero-2,5-hexodiulosonate. Functionally, isomerase involved in ulvan degradation. Ulvan is the main polysaccharide component of the Ulvales (green seaweed) cell wall. It is composed of disaccharide building blocks comprising 3-sulfated rhamnose (Rha3S) linked to D-glucuronic acid (GlcA), L-iduronic acid (IduA), or D-xylose (Xyl). Catalyzes the isomerization of 5-dehydro-4-deoxy-D-glucuronate to 3-deoxy-D-glycero-2,5-hexodiulosonate. This chain is 4-deoxy-L-threo-5-hexosulose-uronate ketol-isomerase, found in Formosa agariphila (strain DSM 15362 / KCTC 12365 / LMG 23005 / KMM 3901 / M-2Alg 35-1).